The following is a 417-amino-acid chain: NADH-quinone oxidoreductase subunit D (417 aa).

Belongs to the complex I 49 kDa subunit family. In terms of assembly, NDH-1 is composed of 14 different subunits. Subunits NuoB, C, D, E, F, and G constitute the peripheral sector of the complex.

It localises to the cell inner membrane. The enzyme catalyses a quinone + NADH + 5 H(+)(in) = a quinol + NAD(+) + 4 H(+)(out). Functionally, NDH-1 shuttles electrons from NADH, via FMN and iron-sulfur (Fe-S) centers, to quinones in the respiratory chain. The immediate electron acceptor for the enzyme in this species is believed to be ubiquinone. Couples the redox reaction to proton translocation (for every two electrons transferred, four hydrogen ions are translocated across the cytoplasmic membrane), and thus conserves the redox energy in a proton gradient. The chain is NADH-quinone oxidoreductase subunit D from Burkholderia thailandensis (strain ATCC 700388 / DSM 13276 / CCUG 48851 / CIP 106301 / E264).